The following is a 165-amino-acid chain: Nucleotide-binding protein Tfu_2672 (165 aa).

Belongs to the YajQ family.

In terms of biological role, nucleotide-binding protein. This Thermobifida fusca (strain YX) protein is Nucleotide-binding protein Tfu_2672.